Consider the following 545-residue polypeptide: E3 ubiquitin-protein ligase ipaH9.8 (545 aa).

The tract at residues 1–242 (MLPINNNFSL…YHGPRIYFSM (242 aa)) is interaction with target proteins. LRR repeat units lie at residues 57-77 (NSDELRLDRLNLSSLPDNLPA), 78-99 (QITLLNVSYNQLTNLPELPVTL), 100-117 (KKLYSASNKLSELPVLPP), 118-139 (ALESLQVQHNELENLPALPDSL), 140-157 (LTMNISYNEIVSLPSLPQ), 158-179 (ALKNLRATRNFLTELPAFSEGN), 182-203 (VVREYFFDRNQISHIPESILNL), and 205-228 (NECSIHISDNPLSSHALQALQRLT). The segment at 243–250 (SDGQQNTL) is linker. Residues 251–545 (HRPLADAVTA…SENGSQLHHS (295 aa)) form an E3 ubiquitin-protein ligase catalytic domain region. The region spanning 253–545 (PLADAVTAWF…SENGSQLHHS (293 aa)) is the NEL domain. The Glycyl thioester intermediate role is filled by C337.

This sequence belongs to the LRR-containing bacterial E3 ligase family. As to quaternary structure, also interacts with human and mouse U2AF1 (U2AF35). Post-translationally, ubiquitinated in the presence of host E1 ubiquitin-activating enzyme, E2 ubiquitin-conjugating enzyme and ubiquitin.

The protein localises to the secreted. Its subcellular location is the host cytoplasm. It is found in the host nucleus. The catalysed reaction is S-ubiquitinyl-[E2 ubiquitin-conjugating enzyme]-L-cysteine + [acceptor protein]-L-lysine = [E2 ubiquitin-conjugating enzyme]-L-cysteine + N(6)-ubiquitinyl-[acceptor protein]-L-lysine.. With respect to regulation, exists in an autoinhibited state in the absence of substrate protein, due to interactions of the leucine-rich repeats with NEL domain. Is activated upon binding to a substrate protein. Its function is as follows. Effector E3 ubiquitin ligase that interferes with host's ubiquitination pathway and modulates the acute inflammatory responses, thus facilitating bacterial colonization within the host cell. Interacts with IKBKG (NEMO) and TNIP1 (ABIN-1), a ubiquitin-binding adapter protein, which results in TNIP1-dependent 'Lys-27'-linked polyubiquitination of IKBKG. Consequently, polyubiquitinated IKBKG undergoes proteasome-dependent degradation, which perturbs NF-kappa-B activation during bacterial infection. Mediates polyubiquitination of host U2AF1, leading to its proteasomal degradation. Catalyzes 'Lys-48'-linked polyubiquitination and subsequent degradation of a subset of host guanylate-binding proteins (GBP1, GBP2, GBP4 and GBP6), thereby suppressing host cell defense. In contrast, host GBP3 and GBP7 are not ubiquitinated by IpaH9.8. Uses UBE2D2 (UBCH5B) as an E2 ubiquitin-conjugating enzyme. The protein is E3 ubiquitin-protein ligase ipaH9.8 (ipaH9.8) of Shigella boydii serotype 18 (strain CDC 3083-94 / BS512).